The chain runs to 224 residues: UPF0758 protein IL0240 (224 aa).

The MPN domain occupies 102–224 (GFTEPTMVKD…PISFAERGLL (123 aa)). Residues His-173, His-175, and Asp-186 each contribute to the Zn(2+) site. Positions 173 to 186 (HNHPSGVAEPSQAD) match the JAMM motif motif.

It belongs to the UPF0758 family.

The polypeptide is UPF0758 protein IL0240 (Idiomarina loihiensis (strain ATCC BAA-735 / DSM 15497 / L2-TR)).